A 110-amino-acid chain; its full sequence is Phosphoribosyl-ATP pyrophosphatase (110 aa).

Belongs to the PRA-PH family.

The protein localises to the cytoplasm. The catalysed reaction is 1-(5-phospho-beta-D-ribosyl)-ATP + H2O = 1-(5-phospho-beta-D-ribosyl)-5'-AMP + diphosphate + H(+). Its pathway is amino-acid biosynthesis; L-histidine biosynthesis; L-histidine from 5-phospho-alpha-D-ribose 1-diphosphate: step 2/9. This chain is Phosphoribosyl-ATP pyrophosphatase, found in Pseudomonas fluorescens (strain SBW25).